The sequence spans 315 residues: Tryptophan prenyltransferase ComQ (315 aa).

Residues Asp95 and Asp99 each coordinate Mg(2+).

Belongs to the FPP/GGPP synthase family. Requires Mg(2+) as cofactor.

It is found in the cell membrane. The catalysed reaction is L-tryptophyl-[protein] + (2E,6E)-farnesyl diphosphate = (2S,3R)-3-farnesyl-2,3-dihydro-2,N(alpha)-cyclo-L-tryptophyl-[protein] + diphosphate. In terms of biological role, part of a major quorum-sensing system that regulates the development of genetic competence. Involved in the maturation of the competence pheromone ComX. Acts by catalyzing the transfer of a farnesyl group on the ComX pheromone. In vitro, can also catalyze the farnesylation of single tryptophan and tryptophan derivatives. This chain is Tryptophan prenyltransferase ComQ, found in Bacillus subtilis subsp. natto (strain BEST195).